The chain runs to 458 residues: Histone acetyltransferase KAT8 (458 aa).

2 stretches are compositionally biased toward low complexity: residues 1 to 17 (MAAQGATAAVAATTSGT) and 25 to 35 (PGENAAVEGPA). Positions 1 to 52 (MAAQGATAAVAATTSGTVGEGEPGPGENAAVEGPARSPGRVSPPTPARGEPE) are disordered. N-acetylalanine is present on alanine 2. Serine 37 and serine 42 each carry phosphoserine. One can recognise a Tudor-knot domain in the interval 55 to 110 (VEIGETYLCRRPDSTWHSAEVIQSRVNDQEGREEFYVHYVGFNRRLDEWVDKNRLA). An N6-acetyllysine modification is found at lysine 113. The short motif at 140 to 149 (RNQKRKHDEI) is the Nuclear localization signal element. An MYST-type HAT domain is found at 174–447 (TKVKYVDKIH…VDSVCLKWAP (274 aa)). Residues 174 to 458 (TKVKYVDKIH…KHKQVKLSKK (285 aa)) form a sufficient for interaction with KANSL1 region. The C2HC MYST-type zinc-finger motif lies at 207–232 (LWLCEYCLKYMKFEKSYRFHLGQCQW). Positions 210, 213, 226, and 230 each coordinate Zn(2+). The residue at position 274 (lysine 274) is an N6-acetyllysine. Isoleucine 317, threonine 319, arginine 325, arginine 326, glycine 327, glycine 329, and lysine 330 together coordinate acetyl-CoA. Serine 348 carries the post-translational modification Phosphoserine. Glutamate 350 acts as the Proton donor/acceptor in catalysis. Residues serine 354, serine 363, tyrosine 408, and lysine 432 each contribute to the acetyl-CoA site.

It belongs to the MYST (SAS/MOZ) family. Component of a multisubunit histone acetyltransferase complex (MSL) at least composed of the MOF/KAT8, MSL1/hampin, MSL2L1 and MSL3L1. Component of the NSL complex at least composed of MOF/KAT8, KANSL1, KANSL2, KANSL3, MCRS1, PHF20, OGT1/OGT, WDR5 and HCFC1. Component of some MLL1/MLL complex, at least composed of the core components KMT2A/MLL1, ASH2L, HCFC1, WDR5 and RBBP5, as well as the facultative components BACC1, CHD8, E2F6, HSP70, INO80C, KANSL1, LAS1L, MAX, MCRS1, MGA, MOF/KAT8, PELP1, PHF20, PRP31, RING2, RUVB1/TIP49A, RUVB2/TIP49B, SENP3, TAF1, TAF4, TAF6, TAF7, TAF9 and TEX10. Interacts with the chromodomain of MORF4L1/MRG15. Interacts with ATM (via its Tudor-knot domain); possibly regulating the activity of ATM. Interacts with NELFD. In terms of processing, acetylation at Lys-274 facilitates cognate substrate Lys-binding and acetylation. Although considered as an autoacetylation event, acetylation at Lys-274 probably takes place via a non-enzymatic process following acetyl-CoA-binding, which primes KAT8 for cognate protein-lysine acetylation. During oocyte development, expressed in both oocytes and granulosa cells.

The protein resides in the nucleus. It localises to the chromosome. It is found in the mitochondrion. The enzyme catalyses L-lysyl-[histone] + acetyl-CoA = N(6)-acetyl-L-lysyl-[histone] + CoA + H(+). It catalyses the reaction L-lysyl-[protein] + acetyl-CoA = N(6)-acetyl-L-lysyl-[protein] + CoA + H(+). It carries out the reaction propanoyl-CoA + L-lysyl-[protein] = N(6)-propanoyl-L-lysyl-[protein] + CoA + H(+). The acetyltransferase activity is inhibited by anacardic acid derivatives. Its function is as follows. Histone acetyltransferase that catalyzes histone H4 acetylation at 'Lys-5'- and 'Lys-8' (H4K5ac and H4K8ac) or 'Lys-16' (H4K16ac), depending on the context. Catalytic component of the MSL histone acetyltransferase complex, a multiprotein complex that mediates the majority of histone H4 acetylation at 'Lys-16' (H4K16ac), an epigenetic mark that prevents chromatin compaction. H4K16ac constitutes the only acetylation mark intergenerationally transmitted and regulates key biological processes, such as oogenesis, embryonic stem cell pluripotency, hematopoiesis or glucose metabolism. The MSL complex is required for chromosome stability and genome integrity by maintaining homeostatic levels of H4K16ac. The MSL complex is also involved in gene dosage by promoting up-regulation of genes expressed by the X chromosome. X up-regulation is required to compensate for autosomal biallelic expression. The MSL complex also participates in gene dosage compensation by promoting expression of Tsix non-coding RNA. As part of the NSL histone acetyltransferase complex, catalyzes histone H4 acetylation at 'Lys-5'- and 'Lys-8' (H4K5ac and H4K8ac) at transcription start sites and promotes transcription initiation. The NSL complex also acts as a regulator of gene expression in mitochondria: KAT8 associates with mitochondrial DNA and controls expression of respiratory genes in an acetyltransferase-dependent mechanism. Also functions as an acetyltransferase for non-histone targets, such as ALKBH5, COX17, IRF3, KDM1A/LSD1, LMNA, PAX7 or TP53/p53. Acts as an inhibitor of antiviral immunity by acetylating IRF3, preventing IRF3 recruitment to promoters. Acts as a regulator of asymmetric division in muscle stem cells by mediating acetylation of PAX7. As part of the NSL complex, acetylates TP53/p53 at 'Lys-120'. Acts as a regulator of epithelial-to-mesenchymal transition as part of the NSL complex by mediating acetylation of KDM1A/LSD1. The NSL complex is required for nuclear architecture maintenance by mediating acetylation of LMNA. Promotes mitochondrial integrity by catalyzing acetylation of COX17. In addition to protein acetyltransferase activity, able to mediate protein propionylation. The protein is Histone acetyltransferase KAT8 of Mus musculus (Mouse).